The sequence spans 321 residues: DNA packaging protein (321 aa).

Residues 1-196 (MLSYDRILNF…DERRKTKFGQ (196 aa)) are ATPase. An ATP-binding site is contributed by 13 to 20 (GARGIGKS). A DNA-binding region spans residues 222-321 (KRSKNSKFVF…YEMFKKMRVQ (100 aa)).

The protein belongs to the phi29likevirus gp16 family. Homopentamer. Interacts with the packaging RNA (pRNA). Part of a DNA-gp3-gp16 complex.

It catalyses the reaction ATP + H2O = ADP + phosphate + H(+). In terms of biological role, ATPase required for the genome encapsidation reaction. Part of the active packaging motor via the binding to the packaging RNA (pRNA), itself fixed to the head-tail connector at the unique portal vertex of the prohead. Binds and supercoils the pre-formed, unit-length DNA bound to gp3 to produce an initiation complex for DNA packaging. Provides the energy to actively pump the viral DNA into the prohead. Approximately one molecule of ATP is used in the packaging of 2 bp of viral DNA. ATP hydrolysis results in a conformational change that causes the arginine/lysine finger of one subunit to move into the active site of its neighbor, where it interacts with the negatively charged oxygens on the gamma-phosphate of ATP. After packaging, the ATPase and the pRNA are released from the prohead. The sequence is that of DNA packaging protein (16) from Bacillus subtilis (Bacteriophage B103).